The sequence spans 503 residues: Aromatase (503 aa).

2 helical membrane passes run 19–39 and 303–323; these read EAMP…LLVW and MLIA…FLIA. 2 residues coordinate substrate: Asp309 and Met374. Cys437 contacts heme.

The protein belongs to the cytochrome P450 family. Heme is required as a cofactor. Post-translationally, phosphorylated in vitro by PKA and PKG/PRKG1. These phosphorylations inhibit the catalytic activity as measured by estrone synthesis from androstenedione (36% decrease for PKA and 30% for PKG/PRKG1). In terms of tissue distribution, widely expressed, including in adult and fetal brain, placenta, skin fibroblasts, adipose tissue and gonads.

It localises to the endoplasmic reticulum membrane. It is found in the microsome membrane. It carries out the reaction testosterone + 3 reduced [NADPH--hemoprotein reductase] + 3 O2 = 17beta-estradiol + formate + 3 oxidized [NADPH--hemoprotein reductase] + 4 H2O + 4 H(+). The enzyme catalyses androst-4-ene-3,17-dione + 3 reduced [NADPH--hemoprotein reductase] + 3 O2 = estrone + formate + 3 oxidized [NADPH--hemoprotein reductase] + 4 H2O + 4 H(+). The catalysed reaction is androst-4-ene-3,17-dione + reduced [NADPH--hemoprotein reductase] + O2 = 19-hydroxyandrost-4-ene-3,17-dione + oxidized [NADPH--hemoprotein reductase] + H2O + H(+). It catalyses the reaction 19-hydroxyandrost-4-ene-3,17-dione + reduced [NADPH--hemoprotein reductase] + O2 = 19-oxo-androst-4-ene-3,17-dione + oxidized [NADPH--hemoprotein reductase] + 2 H2O + H(+). It carries out the reaction 19-oxo-androst-4-ene-3,17-dione + reduced [NADPH--hemoprotein reductase] + O2 = estrone + formate + oxidized [NADPH--hemoprotein reductase] + H2O + 2 H(+). The enzyme catalyses estrone + reduced [NADPH--hemoprotein reductase] + O2 = 2-hydroxyestrone + oxidized [NADPH--hemoprotein reductase] + H2O + H(+). The catalysed reaction is 17beta-hydroxy-5alpha-androstan-3-one + reduced [NADPH--hemoprotein reductase] + O2 = 17beta,19-dihydroxy-3-oxo-5alpha-androstanone + oxidized [NADPH--hemoprotein reductase] + H2O + H(+). It catalyses the reaction 17beta,19-dihydroxy-3-oxo-5alpha-androstanone + reduced [NADPH--hemoprotein reductase] + O2 = 17beta-hydroxy-3,19-dioxo-5alpha-androstanone + oxidized [NADPH--hemoprotein reductase] + 2 H2O + H(+). It carries out the reaction 17beta-hydroxy-3,19-dioxo-5alpha-androstanone + reduced [NADPH--hemoprotein reductase] + O2 = 17beta-hydroxy-3-oxo-19-nor-5alpha-androst-1-ene + formate + oxidized [NADPH--hemoprotein reductase] + H2O + 2 H(+). It functions in the pathway steroid hormone biosynthesis. A cytochrome P450 monooxygenase that catalyzes the conversion of C19 androgens, androst-4-ene-3,17-dione (androstenedione) and testosterone to the C18 estrogens, estrone and estradiol, respectively. Catalyzes three successive oxidations of C19 androgens: two conventional oxidations at C19 yielding 19-hydroxy and 19-oxo/19-aldehyde derivatives, followed by a third oxidative aromatization step that involves C1-beta hydrogen abstraction combined with cleavage of the C10-C19 bond to yield a phenolic A ring and formic acid. Alternatively, the third oxidative reaction yields a 19-norsteroid and formic acid. Converts dihydrotestosterone to delta1,10-dehydro 19-nordihydrotestosterone and may play a role in homeostasis of this potent androgen. Also displays 2-hydroxylase activity toward estrone. Mechanistically, uses molecular oxygen inserting one oxygen atom into a substrate, and reducing the second into a water molecule, with two electrons provided by NADPH via cytochrome P450 reductase (CPR; NADPH-ferrihemoprotein reductase). The chain is Aromatase from Homo sapiens (Human).